Consider the following 490-residue polypeptide: ATP synthase subunit beta, chloroplastic (490 aa).

170–177 (GGAGVGKT) is an ATP binding site.

This sequence belongs to the ATPase alpha/beta chains family. As to quaternary structure, F-type ATPases have 2 components, CF(1) - the catalytic core - and CF(0) - the membrane proton channel. CF(1) has five subunits: alpha(3), beta(3), gamma(1), delta(1), epsilon(1). CF(0) has four main subunits: a(1), b(1), b'(1) and c(9-12).

It localises to the plastid. Its subcellular location is the chloroplast thylakoid membrane. It carries out the reaction ATP + H2O + 4 H(+)(in) = ADP + phosphate + 5 H(+)(out). Its function is as follows. Produces ATP from ADP in the presence of a proton gradient across the membrane. The catalytic sites are hosted primarily by the beta subunits. This Calystegia sepium (Hedge bindweed) protein is ATP synthase subunit beta, chloroplastic.